The chain runs to 88 residues: Large ribosomal subunit protein uL29 (88 aa).

The protein belongs to the universal ribosomal protein uL29 family.

The polypeptide is Large ribosomal subunit protein uL29 (rpl29) (Sulfurisphaera tokodaii (strain DSM 16993 / JCM 10545 / NBRC 100140 / 7) (Sulfolobus tokodaii)).